The chain runs to 546 residues: Alpha-taxilin (546 aa).

Disordered stretches follow at residues 1-170 (MKNQ…GLGK) and 482-546 (NKRV…SARA). A compositionally biased stretch (polar residues) spans 11 to 21 (AKQSNPKSSPG). 2 stretches are compositionally biased toward basic and acidic residues: residues 70 to 80 (DVSEELSRQLE) and 143 to 158 (EEIR…DHRR). Residue S72 is modified to Phosphoserine. The stretch at 186 to 491 (EEKLAALCKK…NKRVQDLSAG (306 aa)) forms a coiled coil. S515 carries the post-translational modification Phosphoserine. A compositionally biased stretch (polar residues) spans 530–546 (TEASGQTGPQEPTSARA).

It belongs to the taxilin family. As to quaternary structure, binds to the C-terminal coiled coil region of syntaxin family members STX1A, STX3A and STX4A, but not when these proteins are complexed with SNAP25, VAMP2 or STXBP1, suggesting that it interacts with syntaxins that do not form the SNARE complex. In terms of tissue distribution, ubiquitous, with much higher expression in heart, kidney, liver and pancreas.

Functionally, may be involved in intracellular vesicle traffic and potentially in calcium-dependent exocytosis in neuroendocrine cells. The sequence is that of Alpha-taxilin (TXLNA) from Homo sapiens (Human).